The primary structure comprises 239 residues: tRNA (guanine-N(7)-)-methyltransferase (239 aa).

S-adenosyl-L-methionine is bound by residues E69, E94, D121, and D144. D144 is an active-site residue. K148 provides a ligand contact to substrate. The interval 150–155 is interaction with RNA; the sequence is RHNKRR. Residues D180 and 217–220 contribute to the substrate site; that span reads TKFE.

It belongs to the class I-like SAM-binding methyltransferase superfamily. TrmB family. As to quaternary structure, monomer.

The catalysed reaction is guanosine(46) in tRNA + S-adenosyl-L-methionine = N(7)-methylguanosine(46) in tRNA + S-adenosyl-L-homocysteine. It functions in the pathway tRNA modification; N(7)-methylguanine-tRNA biosynthesis. Its function is as follows. Catalyzes the formation of N(7)-methylguanine at position 46 (m7G46) in tRNA. The polypeptide is tRNA (guanine-N(7)-)-methyltransferase (Shigella flexneri serotype 5b (strain 8401)).